Consider the following 444-residue polypeptide: Tol-Pal system protein TolB (444 aa).

The signal sequence occupies residues 1-19 (MRNIIYFILSLLFSVTSYA).

Belongs to the TolB family. The Tol-Pal system is composed of five core proteins: the inner membrane proteins TolA, TolQ and TolR, the periplasmic protein TolB and the outer membrane protein Pal. They form a network linking the inner and outer membranes and the peptidoglycan layer.

Its subcellular location is the periplasm. In terms of biological role, part of the Tol-Pal system, which plays a role in outer membrane invagination during cell division and is important for maintaining outer membrane integrity. This chain is Tol-Pal system protein TolB, found in Rickettsia africae (strain ESF-5).